A 252-amino-acid chain; its full sequence is Large ribosomal subunit protein uL29m (252 aa).

The residue at position 146 (Lys-146) is an N6-acetyllysine. The span at 230 to 240 shows a compositional bias: basic residues; sequence KKKEKILHAKF. A disordered region spans residues 230-252; the sequence is KKKEKILHAKFPHLSQERKSSSV.

This sequence belongs to the universal ribosomal protein uL29 family. In terms of assembly, component of the mitochondrial ribosome large subunit (39S) which comprises a 16S rRNA and about 50 distinct proteins.

Its subcellular location is the mitochondrion. This Mus musculus (Mouse) protein is Large ribosomal subunit protein uL29m (Mrpl47).